We begin with the raw amino-acid sequence, 297 residues long: DNA processing protein DprA (297 aa).

This sequence belongs to the DprA/Smf family. As to quaternary structure, interacts with RecA. Interacts with ComFA and ComFC.

Its subcellular location is the cytoplasm. Its function is as follows. Protein that helps load RecA onto ssDNA during transformation. Binds cooperatively to circular ssDNA, is able to bridge different segments of DNA. Favors the loading of RecA onto SsbA- or SsbB-coated ssDNA and formation of RecA-DNA filaments. RecA-ATP cannot catalyze homologous DNA strand exchange; SsbA and DprA activate strand exchange by RecA-ATP. The sequence is that of DNA processing protein DprA from Bacillus subtilis (strain 168).